Reading from the N-terminus, the 238-residue chain is UDP-2,3-diacylglucosamine hydrolase (238 aa).

The Mn(2+) site is built by Asp8, His10, Asp41, Asn78, and His113. 78–79 lines the substrate pocket; it reads NR. Positions 121, 159, 163, 166, and 194 each coordinate substrate. Positions 194 and 196 each coordinate Mn(2+).

Belongs to the LpxH family. Mn(2+) serves as cofactor.

Its subcellular location is the cell inner membrane. It carries out the reaction UDP-2-N,3-O-bis[(3R)-3-hydroxytetradecanoyl]-alpha-D-glucosamine + H2O = 2-N,3-O-bis[(3R)-3-hydroxytetradecanoyl]-alpha-D-glucosaminyl 1-phosphate + UMP + 2 H(+). It participates in glycolipid biosynthesis; lipid IV(A) biosynthesis; lipid IV(A) from (3R)-3-hydroxytetradecanoyl-[acyl-carrier-protein] and UDP-N-acetyl-alpha-D-glucosamine: step 4/6. Its function is as follows. Hydrolyzes the pyrophosphate bond of UDP-2,3-diacylglucosamine to yield 2,3-diacylglucosamine 1-phosphate (lipid X) and UMP by catalyzing the attack of water at the alpha-P atom. Involved in the biosynthesis of lipid A, a phosphorylated glycolipid that anchors the lipopolysaccharide to the outer membrane of the cell. This chain is UDP-2,3-diacylglucosamine hydrolase, found in Shewanella halifaxensis (strain HAW-EB4).